A 241-amino-acid chain; its full sequence is METVDCGEAAPRAPQPASIQVHFHHESGLAKLLLGGCSLLQPLLLPRPRATSRALGRHRLLATSWVMQIVLGLLSGVLGGFLYIFSSTTLRNSGAPIWTGAVAVLAGAVAFIYEKRGGIYWALLRTLLALAAFSTATAATIIGAGRFYEYHFIFYKGICNVSPSWRPTGAPTLSPDLERLQQCTAYVNMLKALFISINAMLLGVWVLLLLASLLPLCLCCWRRYRRKEKRDLPLEETVRSE.

S38 bears the Phosphoserine mark. 4 helical membrane passes run W65–F85, S93–Y113, L127–F147, and L193–L213.

Belongs to the TMEM176 family. Interacts with MCOLN2.

The protein resides in the membrane. This chain is Transmembrane protein 176A (TMEM176A), found in Bos taurus (Bovine).